Reading from the N-terminus, the 375-residue chain is Citrate synthase (375 aa).

Active-site residues include H266 and D317.

The protein belongs to the citrate synthase family. As to quaternary structure, homohexamer.

It catalyses the reaction oxaloacetate + acetyl-CoA + H2O = citrate + CoA + H(+). It participates in carbohydrate metabolism; tricarboxylic acid cycle; isocitrate from oxaloacetate: step 1/2. Allosterically inhibited by NADH. This is Citrate synthase (gltA) from Mycolicibacterium smegmatis (Mycobacterium smegmatis).